Reading from the N-terminus, the 299-residue chain is ATP phosphoribosyltransferase (299 aa).

This sequence belongs to the ATP phosphoribosyltransferase family. Long subfamily. It depends on Mg(2+) as a cofactor.

The protein resides in the cytoplasm. It carries out the reaction 1-(5-phospho-beta-D-ribosyl)-ATP + diphosphate = 5-phospho-alpha-D-ribose 1-diphosphate + ATP. It participates in amino-acid biosynthesis; L-histidine biosynthesis; L-histidine from 5-phospho-alpha-D-ribose 1-diphosphate: step 1/9. Feedback inhibited by histidine. Functionally, catalyzes the condensation of ATP and 5-phosphoribose 1-diphosphate to form N'-(5'-phosphoribosyl)-ATP (PR-ATP). Has a crucial role in the pathway because the rate of histidine biosynthesis seems to be controlled primarily by regulation of HisG enzymatic activity. The polypeptide is ATP phosphoribosyltransferase (Shewanella denitrificans (strain OS217 / ATCC BAA-1090 / DSM 15013)).